The following is a 365-amino-acid chain: Patr class I histocompatibility antigen, A-108 alpha chain (365 aa).

Positions 1-24 are cleaved as a signal peptide; it reads MAVMPPRTLLLLLSGALALTQTWA. Positions 25–114 are alpha-1; the sequence is GSHSMRYFYT…LRGYYNQSED (90 aa). Residues 25–308 lie on the Extracellular side of the membrane; that stretch reads GSHSMRYFYT…EPSSQPTIPI (284 aa). Asparagine 110 is a glycosylation site (N-linked (GlcNAc...) asparagine). An alpha-2 region spans residues 115-206; the sequence is GSHTIQIMYG…ENGKETLQRT (92 aa). Intrachain disulfides connect cysteine 125–cysteine 188 and cysteine 227–cysteine 283. The alpha-3 stretch occupies residues 207 to 298; sequence DPPKTHMTHH…GLPKPLTLRW (92 aa). Positions 209–295 constitute an Ig-like C1-type domain; sequence PKTHMTHHPI…QHEGLPKPLT (87 aa). A connecting peptide region spans residues 299 to 308; sequence EPSSQPTIPI. Residues 309–332 traverse the membrane as a helical segment; the sequence is VGIIAGLVLLGAVITGAVVAAVMW. Residues 333–365 lie on the Cytoplasmic side of the membrane; the sequence is RRKSSDRKGGSYTQAASSDSAQGSDVSLTACKV. The disordered stretch occupies residues 339 to 360; it reads RKGGSYTQAASSDSAQGSDVSL. The residue at position 343 (serine 343) is a Phosphoserine. At tyrosine 344 the chain carries Phosphotyrosine. A compositionally biased stretch (low complexity) spans 346 to 359; that stretch reads QAASSDSAQGSDVS. A phosphoserine mark is found at serine 349, serine 350, serine 352, serine 356, and serine 359.

Belongs to the MHC class I family. Heterodimer of an alpha chain and a beta chain (beta-2-microglobulin).

The protein localises to the membrane. Its function is as follows. Involved in the presentation of foreign antigens to the immune system. This chain is Patr class I histocompatibility antigen, A-108 alpha chain (Patr-A), found in Pan troglodytes (Chimpanzee).